We begin with the raw amino-acid sequence, 753 residues long: Lysyl oxidase homolog 3 (753 aa).

Positions 1 to 25 (MRPVSVWQWSPWGLLLCLLCSSCLG) are cleaved as a signal peptide. SRCR domains are found at residues 44–145 (FRLA…VICK) and 169–282 (VRIR…VSCV). 6 disulfide bridges follow: Cys-70–Cys-134, Cys-83–Cys-144, Cys-114–Cys-124, Cys-201–Cys-271, Cys-214–Cys-281, and Cys-248–Cys-258. Asn-111 carries N-linked (GlcNAc...) asparagine glycosylation. Asn-266 carries an N-linked (GlcNAc...) asparagine glycan. Low complexity predominate over residues 290–302 (SSGQKKQQQSKPQ). The segment at 290–315 (SSGQKKQQQSKPQGEARVRLKGGAHP) is disordered. SRCR domains are found at residues 307–407 (VRLK…VRCN) and 417–525 (IRLS…VICS). Cystine bridges form between Cys-332/Cys-396, Cys-345/Cys-406, Cys-376/Cys-386, Cys-446/Cys-511, Cys-459/Cys-524, Cys-492/Cys-502, Cys-554/Cys-560, Cys-606/Cys-654, Cys-638/Cys-644, Cys-666/Cys-676, and Cys-713/Cys-727. Residues Asn-390 and Asn-481 are each glycosylated (N-linked (GlcNAc...) asparagine). The interval 529 to 732 (SDLLLHSALV…WVHNCHIGDA (204 aa)) is lysyl-oxidase like. Cu cation-binding residues include His-607, His-609, and His-611. A glycan (N-linked (GlcNAc...) asparagine) is linked at Asn-625. Positions 634-670 (KASFCLEDTECQEDVSKRYECANFGEQGITVGCWDLY) form a cross-link, lysine tyrosylquinone (Lys-Tyr). Tyr-670 is modified (2',4',5'-topaquinone).

Belongs to the lysyl oxidase family. In terms of assembly, interacts with STAT3. Cu cation serves as cofactor. Lysine tyrosylquinone residue is required as a cofactor. The lysine tyrosylquinone cross-link (LTQ) is generated by condensation of the epsilon-amino group of a lysine with a topaquinone produced by oxidation of tyrosine. Isoform 1: Predominantly detected in the heart, placenta, lung, and small intestine. Isoform 2: Highly detected in the kidney, pancreas, spleen, and thymus, and is absent in lung. In eye, present in all layers of corneas as well as in the limbus and conjunctiva (at protein level).

It is found in the secreted. It localises to the extracellular space. The protein localises to the cytoplasm. Its subcellular location is the nucleus. It catalyses the reaction L-lysyl-[protein] + O2 + H2O = (S)-2-amino-6-oxohexanoyl-[protein] + H2O2 + NH4(+). It carries out the reaction N(6)-acetyl-L-lysyl-[protein] + O2 + H2O = acetamide + (S)-2-amino-6-oxohexanoyl-[protein] + H2O2. Its function is as follows. Protein-lysine 6-oxidase that mediates the oxidation of peptidyl lysine residues to allysine in target proteins. Catalyzes the post-translational oxidative deamination of peptidyl lysine residues in precursors of elastin and different types of collagens, a prerequisite in the formation of cross-links between collagens and elastin. Required for somite boundary formation by catalyzing oxidation of fibronectin (FN1), enhancing integrin signaling in myofibers and their adhesion to the myotendinous junction (MTJ). Acts as a regulator of inflammatory response by inhibiting differentiation of naive CD4(+) T-cells into T-helper Th17 or regulatory T-cells (Treg): acts by interacting with STAT3 in the nucleus and catalyzing both deacetylation and oxidation of lysine residues on STAT3, leading to disrupt STAT3 dimerization and inhibit STAT3 transcription activity. Oxidation of lysine residues to allysine on STAT3 preferentially takes place on lysine residues that are acetylated. Also able to catalyze deacetylation of lysine residues on STAT3. In terms of biological role, shows protein-lysine 6-oxidase activity toward elastin and different types of collagens, with the highest activity toward collagen type VIII. Shows protein-lysine 6-oxidase activity toward elastin and different types of collagens, with the highest activity toward collagen type IV. This Homo sapiens (Human) protein is Lysyl oxidase homolog 3.